Consider the following 757-residue polypeptide: Cellulose synthase-like protein B1 (757 aa).

Transmembrane regions (helical) follow at residues T18–L38 and V50–C70. Residue D136 is part of the active site. Residues E186–D216 are a coiled coil. Residue D462 is part of the active site. 6 helical membrane passes run L533–L553, L569–F589, L615–I635, F674–G694, A710–F730, and T737–V757.

Belongs to the glycosyltransferase 2 family. Plant cellulose synthase-like B subfamily. As to expression, expressed in young seedlings, primarily in the vascular tissue.

It is found in the golgi apparatus membrane. Thought to be a Golgi-localized beta-glycan synthase that polymerize the backbones of noncellulosic polysaccharides (hemicelluloses) of plant cell wall. The chain is Cellulose synthase-like protein B1 (CSLB1) from Arabidopsis thaliana (Mouse-ear cress).